We begin with the raw amino-acid sequence, 223 residues long: Adenylate kinase (223 aa).

17 to 22 (GAGKGT) contributes to the ATP binding site. Positions 37–66 (STGDMLRSQVAKGTPLGVEAKKIMDQGGLV) are NMP. Residues Thr-38, Arg-43, 64–66 (GLV), 93–96 (GFPR), and Gln-100 each bind AMP. Residues 134 to 171 (GRLVHPSSGRSYHKLFNPPKVEMTDDVTGEPLVQRSDD) form an LID region. ATP is bound by residues Arg-135 and 144–145 (SY). Positions 168 and 179 each coordinate AMP. Gln-207 contacts ATP.

It belongs to the adenylate kinase family. AK2 subfamily. As to quaternary structure, monomer.

It localises to the cytoplasm. It is found in the cytosol. The protein localises to the mitochondrion intermembrane space. The catalysed reaction is AMP + ATP = 2 ADP. Its function is as follows. Catalyzes the reversible transfer of the terminal phosphate group between ATP and AMP. Plays an important role in cellular energy homeostasis and in adenine nucleotide metabolism. Adenylate kinase activity is critical for regulation of the phosphate utilization and the AMP de novo biosynthesis pathways. In Vanderwaltozyma polyspora (strain ATCC 22028 / DSM 70294 / BCRC 21397 / CBS 2163 / NBRC 10782 / NRRL Y-8283 / UCD 57-17) (Kluyveromyces polysporus), this protein is Adenylate kinase.